A 474-amino-acid chain; its full sequence is Calcium/calmodulin-dependent protein kinase type IV (474 aa).

Ser11 and Ser12 each carry phosphoserine; by autocatalysis. The Protein kinase domain maps to 42 to 296 (FEVESELGRG…TFQALQHPWV (255 aa)). Residues 48–56 (LGRGATSIV) and Lys71 contribute to the ATP site. Residue Thr53 is glycosylated (O-linked (GlcNAc) threonine). Ser54 carries an O-linked (GlcNAc) serine glycan. O-linked (GlcNAc) serine glycosylation is present at Ser133. Catalysis depends on Asp160, which acts as the Proton acceptor. An O-linked (GlcNAc) serine glycan is attached at Ser185. Thr196 is modified (phosphothreonine; by CaMKK1 and CaMKK2). The interval 297 to 336 (TGKAANFVHMDTAQKKLQEFNARRKLKAAVKAVVASSRLG) is autoinhibitory domain. The tract at residues 302-319 (NFVHMDTAQKKLQEFNAR) is PP2A-binding. The segment at 318–337 (ARRKLKAAVKAVVASSRLGS) is calmodulin-binding. Position 332 is a phosphoserine; by autocatalysis (Ser332). A disordered region spans residues 336-474 (GSASSSHTNI…PQQDAILPEY (139 aa)). A Phosphoserine modification is found at Ser337. 3 O-linked (GlcNAc) serine glycosylation sites follow: Ser340, Ser341, and Ser352. Positions 342 to 356 (HTNIQESNKASSEAQ) are enriched in polar residues. Over residues 360-392 (DGKDKTDPLENKMQAGDHEAAKAAADETMKLQS) the composition is skewed to basic and acidic residues. The span at 393–413 (EEVEEEEGVKEEEEEEEEEEE) shows a compositional bias: acidic residues. A compositionally biased stretch (basic and acidic residues) spans 431 to 454 (QEMKRNSEETLKSVEEEMDPKAEE). A phosphoserine mark is found at Ser437 and Ser443.

Belongs to the protein kinase superfamily. CAMK Ser/Thr protein kinase family. CaMK subfamily. As to quaternary structure, monomer. Interacts with protein phosphatase 2A (PPP2CA/PPP2CB); the interaction is mutually exclusive with binding to Ca(2+)/calmodulin. In terms of processing, phosphorylated by CaMKK1 and CaMKK2 on Thr-196. Dephosphorylated by protein phosphatase 2A. Autophosphorylated on Ser-11 and Ser-12. Post-translationally, glycosylation at Ser-185 modulates the phosphorylation of CaMK4 at Thr-196 and negatively regulates its activity toward CREB1 in basal conditions and during early inomycin stimulation. The N-terminus of calspermin is blocked. Isoform 1 is expressed in brain and isoform 2 is testis specific.

It localises to the cytoplasm. It is found in the nucleus. It catalyses the reaction L-seryl-[protein] + ATP = O-phospho-L-seryl-[protein] + ADP + H(+). It carries out the reaction L-threonyl-[protein] + ATP = O-phospho-L-threonyl-[protein] + ADP + H(+). With respect to regulation, activated by Ca(2+)/calmodulin. Binding of calmodulin results in conformational change that relieves intrasteric autoinhibition and allows phosphorylation of Thr-196 within the activation loop by CaMKK1 or CaMKK2. Phosphorylation of Thr-196 results in a 10-20-fold increase in total activity to generate Ca(2+)/calmodulin-independent activity. Autophosphorylation of the N-terminus Ser-11 and Ser-12 is required for full activation. Inactivated by protein phosphatase 2A (PPP2CA/PPP2CB) which dephosphorylates Thr-196, thereby terminating autonomous activity and helping to maintain the enzyme in its autoinhibited state. In terms of biological role, calcium/calmodulin-dependent protein kinase that operates in the calcium-triggered CaMKK-CaMK4 signaling cascade and regulates, mainly by phosphorylation, the activity of several transcription activators, such as CREB1, MEF2D, JUN and RORA, which play pivotal roles in immune response, inflammation, and memory consolidation. In the thymus, regulates the CD4(+)/CD8(+) double positive thymocytes selection threshold during T-cell ontogeny. In CD4 memory T-cells, is required to link T-cell antigen receptor (TCR) signaling to the production of IL2, IFNG and IL4 (through the regulation of CREB and MEF2). Regulates the differentiation and survival phases of osteoclasts and dendritic cells (DCs). Mediates DCs survival by linking TLR4 and the regulation of temporal expression of BCL2. Phosphorylates the transcription activator CREB1 on 'Ser-133' in hippocampal neuron nuclei and contribute to memory consolidation and long term potentiation (LTP) in the hippocampus. Can activate the MAP kinases MAPK1/ERK2, MAPK8/JNK1 and MAPK14/p38 and stimulate transcription through the phosphorylation of ELK1 and ATF2. Can also phosphorylate in vitro CREBBP, PRM2, MEF2A and STMN1/OP18. Functionally, heat-stable, acidic, calmodulin-binding protein. The sequence is that of Calcium/calmodulin-dependent protein kinase type IV (Camk4) from Rattus norvegicus (Rat).